A 493-amino-acid polypeptide reads, in one-letter code: Cytoplasmic tRNA 2-thiolation protein 2 (493 aa).

S489 is modified (phosphoserine).

Belongs to the CTU2/NCS2 family. In terms of assembly, interacts with NCS6 and URM1. May act by forming a heterodimer with NCS6.

It localises to the cytoplasm. It functions in the pathway tRNA modification; 5-methoxycarbonylmethyl-2-thiouridine-tRNA biosynthesis. In terms of biological role, plays a central role in 2-thiolation of mcm(5)S(2)U at tRNA wobble positions of tRNA(Lys), tRNA(Glu) and tRNA(Gln). May act by forming a heterodimer with NCS6 that ligates sulfur from thiocarboxylated URM1 onto the uridine of tRNAs at wobble position. Prior mcm(5) tRNA modification by the elongator complex is required for 2-thiolation. May also be involved in protein urmylation. The chain is Cytoplasmic tRNA 2-thiolation protein 2 from Saccharomyces cerevisiae (strain YJM789) (Baker's yeast).